A 1088-amino-acid polypeptide reads, in one-letter code: DNA polymerase II large subunit (1088 aa).

It belongs to the archaeal DNA polymerase II family. As to quaternary structure, heterodimer of a large subunit and a small subunit.

It carries out the reaction DNA(n) + a 2'-deoxyribonucleoside 5'-triphosphate = DNA(n+1) + diphosphate. The enzyme catalyses Exonucleolytic cleavage in the 3'- to 5'-direction to yield nucleoside 5'-phosphates.. Possesses two activities: a DNA synthesis (polymerase) and an exonucleolytic activity that degrades single-stranded DNA in the 3'- to 5'-direction. Has a template-primer preference which is characteristic of a replicative DNA polymerase. The chain is DNA polymerase II large subunit (polC) from Thermoplasma volcanium (strain ATCC 51530 / DSM 4299 / JCM 9571 / NBRC 15438 / GSS1).